Here is a 447-residue protein sequence, read N- to C-terminus: Elongation factor 1-alpha (447 aa).

The tr-type G domain maps to 5–230; the sequence is KTHINIVVIG…DQINEPKRPS (226 aa). A G1 region spans residues 14-21; that stretch reads GHVDSGKS. 14-21 contributes to the GTP binding site; that stretch reads GHVDSGKS. Position 55 is an N6,N6-dimethyllysine (Lys-55). The segment at 70 to 74 is G2; that stretch reads GITID. Lys-79 is modified (N6,N6,N6-trimethyllysine). A G3 region spans residues 91–94; the sequence is DAPG. GTP is bound by residues 91-95 and 153-156; these read DAPGH and NKMD. Positions 153-156 are G4; sequence NKMD. Residue Lys-187 is modified to N6,N6,N6-trimethyllysine. The interval 194–196 is G5; that stretch reads SGF. Lys-261 carries the post-translational modification N6-methyllysine. At Glu-289 the chain carries 5-glutamyl glycerylphosphorylethanolamine. Lys-306 is subject to N6,N6,N6-trimethyllysine. At Glu-362 the chain carries 5-glutamyl glycerylphosphorylethanolamine. Lys-396 is subject to N6,N6,N6-trimethyllysine.

It belongs to the TRAFAC class translation factor GTPase superfamily. Classic translation factor GTPase family. EF-Tu/EF-1A subfamily.

Its subcellular location is the cytoplasm. Functionally, this protein promotes the GTP-dependent binding of aminoacyl-tRNA to the A-site of ribosomes during protein biosynthesis. The protein is Elongation factor 1-alpha (REFA1) of Oryza sativa subsp. japonica (Rice).